The following is a 438-amino-acid chain: Serine/threonine exchanger SteT (438 aa).

Residues 1–11 (MHTEDNGLKKE) lie on the Cytoplasmic side of the membrane. The helical transmembrane segment at 12–32 (IGLLFALTLVIGTIIGSGVFM) threads the bilayer. Residues 33-45 (KPGAVLAYSGDSK) lie on the Extracellular side of the membrane. The helical transmembrane segment at 46 to 66 (MALFAWLLGGILTLAGGLTIA) threads the bilayer. Residues 67-98 (EIGTQIPKTGGLYTYLEEVYGEFWGFLCGWVQ) are Cytoplasmic-facing. A helical membrane pass occupies residues 99-119 (IIIYGPAIIGALGLYFGSLMA). The Extracellular portion of the chain corresponds to 120–126 (NLFGWGS). A helical membrane pass occupies residues 127-147 (GLSKVIGIIAVLFLCVINIIG). Residues 148–151 (TKYG) lie on the Cytoplasmic side of the membrane. The helical transmembrane segment at 152 to 172 (GFVQTLTTIGKLIPIACIIVF) threads the bilayer. Over 173-193 (GLWKGDQHIFTAVNESISDMN) the chain is Extracellular. Residues 194-214 (FGAAILATLFAYDGWILLAAL) form a helical membrane-spanning segment. Over 215-230 (GGEMKNPEKLLPRAMT) the chain is Cytoplasmic. The chain crosses the membrane as a helical span at residues 231 to 251 (GGLLIVTAIYIFINFALLHIL). Residues 252–269 (SANEIVTLGENATSTAAT) lie on the Extracellular side of the membrane. Residues 270-290 (MLFGSIGGKLISVGIIVSIFG) form a helical membrane-spanning segment. The Cytoplasmic segment spans residues 291 to 327 (CLNGKVLSFPRVSFAMAERKQLPFAEKLSHVHPSFRT). Residues 328 to 348 (PWIAISFQIALALIMMLISNP) traverse the membrane as a helical segment. Topologically, residues 349 to 352 (DKLS) are extracellular. The helical transmembrane segment at 353 to 373 (EISIFMIYIFYVMAFFAVFIL) threads the bilayer. Residues 374-388 (RKRAKGEKRAYSVPL) lie on the Cytoplasmic side of the membrane. Residues 389 to 409 (YPFMPILAIAGSFFVLGSTLI) form a helical membrane-spanning segment. The Extracellular portion of the chain corresponds to 410–411 (TD). The helical transmembrane segment at 412 to 432 (TMSCGLSILIGLAGLPVYYGM) threads the bilayer. Over 433-438 (KKRKAS) the chain is Cytoplasmic.

The protein belongs to the amino acid-polyamine-organocation (APC) superfamily. L-type amino acid transporter (LAT) (TC 2.A.3.8) family. In terms of assembly, monomer.

It is found in the cell membrane. In terms of biological role, exhibits an obligate exchange activity for serine, threonine and aromatic amino acids. This is Serine/threonine exchanger SteT (steT) from Bacillus subtilis (strain 168).